A 122-amino-acid polypeptide reads, in one-letter code: Small ribosomal subunit protein uS13 (122 aa).

Residues 92–122 form a disordered region; sequence HRKQLPVRGQRTHTNARTRKGKAKPIAGKKK.

The protein belongs to the universal ribosomal protein uS13 family. Part of the 30S ribosomal subunit. Forms a loose heterodimer with protein S19. Forms two bridges to the 50S subunit in the 70S ribosome.

Located at the top of the head of the 30S subunit, it contacts several helices of the 16S rRNA. In the 70S ribosome it contacts the 23S rRNA (bridge B1a) and protein L5 of the 50S subunit (bridge B1b), connecting the 2 subunits; these bridges are implicated in subunit movement. Contacts the tRNAs in the A and P-sites. The sequence is that of Small ribosomal subunit protein uS13 from Methylobacterium radiotolerans (strain ATCC 27329 / DSM 1819 / JCM 2831 / NBRC 15690 / NCIMB 10815 / 0-1).